Here is an 804-residue protein sequence, read N- to C-terminus: Elongation factor G, mitochondrial (804 aa).

The N-terminal 63 residues, 1–63 (MSMHRVARAV…RHFFQSPIIR (63 aa)), are a transit peptide targeting the mitochondrion. The tr-type G domain occupies 99–385 (RRVRNIGIAA…AVCDYLPNPA (287 aa)). Residues 108 to 115 (AHIDSGKT), 183 to 187 (DTPGH), and 237 to 240 (NKMD) contribute to the GTP site.

Belongs to the TRAFAC class translation factor GTPase superfamily. Classic translation factor GTPase family. EF-G/EF-2 subfamily.

The protein localises to the mitochondrion. Its pathway is protein biosynthesis; polypeptide chain elongation. Mitochondrial GTPase that catalyzes the GTP-dependent ribosomal translocation step during translation elongation. During this step, the ribosome changes from the pre-translocational (PRE) to the post-translocational (POST) state as the newly formed A-site-bound peptidyl-tRNA and P-site-bound deacylated tRNA move to the P and E sites, respectively. Catalyzes the coordinated movement of the two tRNA molecules, the mRNA and conformational changes in the ribosome. The polypeptide is Elongation factor G, mitochondrial (mef1) (Sclerotinia sclerotiorum (strain ATCC 18683 / 1980 / Ss-1) (White mold)).